Here is an 810-residue protein sequence, read N- to C-terminus: Lon protease (810 aa).

Residues 8–201 (LPLLPLRGIL…KLCGIVAKEL (194 aa)) form the Lon N-terminal domain. 353–360 (GPPGVGKT) contributes to the ATP binding site. The 182-residue stretch at 589–770 (NDEVGTVTGM…DQVLAIALLE (182 aa)) folds into the Lon proteolytic domain. Catalysis depends on residues Ser-676 and Lys-719.

The protein belongs to the peptidase S16 family. As to quaternary structure, homohexamer. Organized in a ring with a central cavity.

It localises to the cytoplasm. The catalysed reaction is Hydrolysis of proteins in presence of ATP.. ATP-dependent serine protease that mediates the selective degradation of mutant and abnormal proteins as well as certain short-lived regulatory proteins. Required for cellular homeostasis and for survival from DNA damage and developmental changes induced by stress. Degrades polypeptides processively to yield small peptide fragments that are 5 to 10 amino acids long. Binds to DNA in a double-stranded, site-specific manner. This chain is Lon protease, found in Desulforamulus reducens (strain ATCC BAA-1160 / DSM 100696 / MI-1) (Desulfotomaculum reducens).